The following is a 606-amino-acid chain: MNLFTSFVLLTLLILFTPIMVSNTDPHKNNKYQSYVKNIVFCAFITSLIPAMMYLHTNQETLISNWHWITIQTLKLTLSFKMDYFSLMFMPVALFITWSIMEFSMWYMHSDPYINQFFKYLLLFLITMLILVTANNLFQLFIGWEGVGIMSFLLIGWWFGRTDANTAALQAILYNRIGDIGLLASMAWFLSNMNTWDLQQIFMLNQNPLNFPLMGLVLAAAGKSAQFGLHPWLPSAMEGPTPVSALLHSSTMVVAGIFLLVRFYPLMENNKLIQTVTLCLGAITTLFTAICALTQNDIKKIIAFSTSSQLGLMMVTIGLNQPYLAFLHICTHAFFKAMLFLCSGSIIHNLNNEQDIRKMGGLFKALPFTTTALIIGCLALTGMPFLTGFYSKDPIIEAATSSYTNAWALLLTLTATSLTAVYSTRIIFFALLGQPRFPPSTTINENNPLLINPIKRLLIGSIFAGFILSNSIPPVITPLMTMPLHLKLTALTMTTLGFIIAFEINLDTQNLKYTHPSNPFKFSTLLGYFPTIMHRLPPHLDLSMSQKLATSLLDLTWLETTLPKTTALIQLKASTLTSNQQGLIKLYFLSFLITITLSMILFNCPE.

16 helical membrane-spanning segments follow: residues 1–21 (MNLF…PIMV), 35–55 (YVKN…MMYL), 87–107 (LMFM…SMWY), 114–134 (INQF…LVTA), 140–160 (LFIG…WWFG), 171–191 (AILY…WFLS), 211–233 (FPLM…HPWL), 241–261 (TPVS…FLLV), 272–292 (LIQT…AICA), 301–320 (IIAF…IGLN), 325–347 (AFLH…GSII), 366–386 (LPFT…MPFL), 413–433 (LTAT…ALLG), 457–477 (LLIG…PVIT), 482–502 (MPLH…IIAF), and 582–602 (GLIK…MILF).

It belongs to the complex I subunit 5 family. Core subunit of respiratory chain NADH dehydrogenase (Complex I) which is composed of 45 different subunits.

Its subcellular location is the mitochondrion inner membrane. The enzyme catalyses a ubiquinone + NADH + 5 H(+)(in) = a ubiquinol + NAD(+) + 4 H(+)(out). Functionally, core subunit of the mitochondrial membrane respiratory chain NADH dehydrogenase (Complex I) which catalyzes electron transfer from NADH through the respiratory chain, using ubiquinone as an electron acceptor. Essential for the catalytic activity and assembly of complex I. The protein is NADH-ubiquinone oxidoreductase chain 5 (MT-ND5) of Balaenoptera musculus (Blue whale).